Reading from the N-terminus, the 316-residue chain is Pantothenate kinase (316 aa).

95 to 102 (GSVAVGKS) is an ATP binding site.

Belongs to the prokaryotic pantothenate kinase family.

The protein localises to the cytoplasm. The enzyme catalyses (R)-pantothenate + ATP = (R)-4'-phosphopantothenate + ADP + H(+). The protein operates within cofactor biosynthesis; coenzyme A biosynthesis; CoA from (R)-pantothenate: step 1/5. The chain is Pantothenate kinase from Photorhabdus laumondii subsp. laumondii (strain DSM 15139 / CIP 105565 / TT01) (Photorhabdus luminescens subsp. laumondii).